We begin with the raw amino-acid sequence, 162 residues long: Regulator of sigma D (162 aa).

This sequence belongs to the Rsd/AlgQ family. Interacts with RpoD.

It is found in the cytoplasm. Binds RpoD and negatively regulates RpoD-mediated transcription activation by preventing the interaction between the primary sigma factor RpoD with the catalytic core of the RNA polymerase and with promoter DNA. May be involved in replacement of the RNA polymerase sigma subunit from RpoD to RpoS during the transition from exponential growth to the stationary phase. This is Regulator of sigma D from Salmonella paratyphi A (strain ATCC 9150 / SARB42).